The sequence spans 522 residues: U4/U6 small nuclear ribonucleoprotein Prp4 (522 aa).

Positions Met1–Lys13 are enriched in polar residues. The segment at Met1–Leu20 is disordered. An N6-acetyllysine modification is found at Lys27. 7 WD repeats span residues Gly229–Thr268, Gly271–Asp318, Gly321–His360, Gly363–Phe402, Gly405–Thr444, Ala447–Thr487, and Gly490–Ala521.

As to quaternary structure, component of the precatalytic spliceosome (spliceosome B complex). Component of the U4/U6-U5 tri-snRNP complex, a building block of the precatalytic spliceosome (spliceosome B complex). The U4/U6-U5 tri-snRNP complex is composed of the U4, U6 and U5 snRNAs and at least PRPF3, PRPF4, PRPF6, PRPF8, PRPF31, SNRNP200, TXNL4A, SNRNP40, SNRPB, SNRPD1, SNRPD2, SNRPD3, SNRPE, SNRPF, SNRPG, DDX23, CD2BP2, PPIH, SNU13, EFTUD2, SART1 and USP39, plus LSM2, LSM3, LSM4, LSM5, LSM6, LSM7 and LSM8. Interacts directly with PRPF18, PPIH and PRPF3. Part of a heteromeric complex containing PPIH, PRPF3 and PRPF4 that is stable in the absence of RNA. Interacts with ERCC6.

The protein localises to the nucleus. The protein resides in the nucleus speckle. Its function is as follows. Plays a role in pre-mRNA splicing as component of the U4/U6-U5 tri-snRNP complex that is involved in spliceosome assembly, and as component of the precatalytic spliceosome (spliceosome B complex). The polypeptide is U4/U6 small nuclear ribonucleoprotein Prp4 (PRPF4) (Homo sapiens (Human)).